The chain runs to 343 residues: 3-dehydroquinate synthase (343 aa).

NAD(+) is bound by residues 61-66, 95-99, 119-120, Lys-132, Lys-141, and 159-162; these read SGEKYK, GVISD, TT, and FLKT. Positions 174, 231, and 248 each coordinate Zn(2+).

The protein belongs to the sugar phosphate cyclases superfamily. Dehydroquinate synthase family. Requires Co(2+) as cofactor. Zn(2+) serves as cofactor. It depends on NAD(+) as a cofactor.

It is found in the cytoplasm. The enzyme catalyses 7-phospho-2-dehydro-3-deoxy-D-arabino-heptonate = 3-dehydroquinate + phosphate. The protein operates within metabolic intermediate biosynthesis; chorismate biosynthesis; chorismate from D-erythrose 4-phosphate and phosphoenolpyruvate: step 2/7. Functionally, catalyzes the conversion of 3-deoxy-D-arabino-heptulosonate 7-phosphate (DAHP) to dehydroquinate (DHQ). This Helicobacter pylori (strain HPAG1) protein is 3-dehydroquinate synthase.